Consider the following 377-residue polypeptide: uncharacterized protein (377 aa).

A signal peptide spans 1–23; that stretch reads MLKFRNFFKLTLLTLASAFFLSG. C24 is lipidated: N-palmitoyl cysteine. A lipid anchor (S-diacylglycerol cysteine) is attached at C24.

It localises to the cell membrane. This is an uncharacterized protein from Mycoplasma genitalium (strain ATCC 33530 / DSM 19775 / NCTC 10195 / G37) (Mycoplasmoides genitalium).